A 305-amino-acid chain; its full sequence is Aquaporin-1 (305 aa).

The disordered stretch occupies residues methionine 1 to lysine 34. The Cytoplasmic portion of the chain corresponds to methionine 1–histidine 48. Residues phenylalanine 49–isoleucine 69 form a helical membrane-spanning segment. The Extracellular segment spans residues cysteine 70–leucine 91. The chain crosses the membrane as a helical span at residues isoleucine 92 to valine 112. Topologically, residues serine 113 to cysteine 136 are cytoplasmic. The short motif at asparagine 118–alanine 120 is the NPA 1 element. The chain crosses the membrane as a helical span at residues valine 137–methionine 157. Residues threonine 158–arginine 176 are Extracellular-facing. A helical transmembrane segment spans residues glycine 177 to valine 197. Over glutamate 198 to asparagine 203 the chain is Cytoplasmic. The chain crosses the membrane as a helical span at residues phenylalanine 204 to tyrosine 224. Topologically, residues threonine 225–histidine 248 are extracellular. The NPA 2 signature appears at asparagine 230–alanine 232. A helical transmembrane segment spans residues tryptophan 249–leucine 269. Residues glutamine 270–valine 305 lie on the Cytoplasmic side of the membrane. Residues threonine 286 to glutamate 295 are compositionally biased toward basic and acidic residues. Positions threonine 286–valine 305 are disordered. Residues threonine 296 to valine 305 are compositionally biased toward polar residues.

The protein belongs to the MIP/aquaporin (TC 1.A.8) family.

The protein resides in the endoplasmic reticulum membrane. It is found in the cell membrane. In terms of biological role, water channel required to facilitate the transport of water across membranes. Involved in sporulation, freeze tolerance and osmotolerance. Is non-functional in most laboratory strains. This chain is Aquaporin-1 (AQY1), found in Saccharomyces cerevisiae (strain YJM789) (Baker's yeast).